Reading from the N-terminus, the 313-residue chain is Cytochrome c biogenesis protein CcsA (313 aa).

8 consecutive transmembrane segments (helical) span residues 13–35, 43–63, 67–87, 96–116, 142–162, 219–239, 252–269, and 280–300; these read ISFS…EIAG, GMIA…IYSG, LSNL…IHMI, FLSS…TSGL, MLLS…LLVI, VIGI…VWAN, ETWA…LHTR, and AIVA…VNLL.

The protein belongs to the CcmF/CycK/Ccl1/NrfE/CcsA family. In terms of assembly, may interact with Ccs1.

The protein localises to the plastid. It is found in the chloroplast thylakoid membrane. Required during biogenesis of c-type cytochromes (cytochrome c6 and cytochrome f) at the step of heme attachment. The sequence is that of Cytochrome c biogenesis protein CcsA from Amborella trichopoda.